Here is a 479-residue protein sequence, read N- to C-terminus: Neuronal acetylcholine receptor subunit alpha-9 (479 aa).

The N-terminal stretch at 1-25 is a signal peptide; sequence MNRPHSCLSFCWMYFAASGIRAVET. Over 26-237 the chain is Extracellular; that stretch reads ANGKYAQKLF…TFTLLLKRRS (212 aa). Asn-57 carries N-linked (GlcNAc...) asparagine glycosylation. Cysteines 155 and 169 form a disulfide. Residue Asn-170 is glycosylated (N-linked (GlcNAc...) asparagine). 2 residues coordinate Na(+): Ser-191 and Asp-193. An intrachain disulfide couples Cys-219 to Cys-220. 3 consecutive transmembrane segments (helical) span residues 238 to 262, 269 to 287, and 302 to 323; these read SFYI…FYLP, VSLG…LMVA, and YYIA…VMNI. Over 324 to 457 the chain is Cytoplasmic; sequence HFCGAEARPV…WKKVAKVIDR (134 aa). Residues 458–476 traverse the membrane as a helical segment; sequence FFMWIFFAMVFVMTVLIIA.

The protein belongs to the ligand-gated ion channel (TC 1.A.9) family. Acetylcholine receptor (TC 1.A.9.1) subfamily. Alpha-9/CHRNA9 sub-subfamily. In terms of assembly, forms homo- or heterooligomeric channels in conjunction with CHRNA10. The native outer hair cell receptor may be composed of CHRNA9:CHRNA10 heterooligomers. Found in the stoichiometric form (CHRNA9)2:(CHRNA10)3. As to expression, detected in the nasal epithelium, in the outer hair cells of the cochlea, in the pars tuberalis of the hypophysis, and in the developing muscle of the tongue. Also expressed in the neurons of dorsal root ganglia.

It localises to the synaptic cell membrane. Its subcellular location is the cell membrane. The enzyme catalyses Ca(2+)(in) = Ca(2+)(out). It catalyses the reaction Mg(2+)(in) = Mg(2+)(out). It carries out the reaction K(+)(in) = K(+)(out). The catalysed reaction is Na(+)(in) = Na(+)(out). Its activity is regulated as follows. Activated by a myriad of ligands such as acetylcholine. AChR activity is inhibited by the antagonist alpha-conotoxins RgIA and GeXXA, small disulfide-constrained peptides from cone snails. Component of neuronal acetylcholine receptors (nAChRs) that function as pentameric, ligand-gated cation channels with high calcium permeability among other activities. nAChRs are excitatory neurotrasnmitter receptors formed by a collection of nAChR subunits known to mediate synaptic transmission in the nervous system and the neuromuscular junction. Each nAchR subunit confers differential attributes to channel properties, including activation, deactivation and desensitization kinetics, pH sensitivity, cation permeability, and binding to allosteric modulators. Forms either homopentamers or heteropentamers with CHRNA10. Expressed in the inner ear, in sympathetic neurons and in other non-neuronal cells, such as skin keratinocytes and lymphocytes. nAChR formed by CHRNA9:CHRNA10 mediate central nervous system control of auditory and vestibular sensory processing. The channel is permeable to a range of divalent cations including calcium, the influx of which may activate a potassium current which hyperpolarizes the cell membrane. In the ear, mediates synaptic transmission between efferent olivocochlear fibers and hair cells of the cochlea, this may lead to a reduction in basilar membrane motion, altering the activity of auditory nerve fibers and reducing the range of dynamic hearing. This may protect against acoustic trauma. May also regulate keratinocyte adhesion. This is Neuronal acetylcholine receptor subunit alpha-9 (Chrna9) from Rattus norvegicus (Rat).